A 260-amino-acid polypeptide reads, in one-letter code: Meiotic recombination protein rec6 (260 aa).

Positions 197-222 are disordered; that stretch reads QYSESSLLDDSQLLCSSPPVDSTEEA. Low complexity predominate over residues 199-213; the sequence is SESSLLDDSQLLCSS.

It belongs to the TOP6B-like family. In terms of assembly, component of the DSB catalytic core (DSBC) complex, composed of at least rec12, rec6 and rec14. The complex interacts with mde2.

In terms of biological role, required for formation of the rec12-mediated double-strand breaks (DSBs) that initiate meiotic recombination. May be involved primarily in the early steps of meiotic recombination. The chain is Meiotic recombination protein rec6 from Schizosaccharomyces pombe (strain 972 / ATCC 24843) (Fission yeast).